Reading from the N-terminus, the 624-residue chain is Plastin-2 (624 aa).

EF-hand domains are found at residues 9–44 (EEME…ANLP) and 49–84 (RVRE…LKSS). Residues Asp-22, Asp-24, Asn-26, His-28, Glu-33, Asp-62, Asn-64, Asp-66, Lys-68, and Glu-73 each coordinate Ca(2+). Calponin-homology (CH) domains are found at residues 118–234 (EEEK…KIGL), 262–373 (LSPE…NKYP), 392–501 (TREE…RRYT), and 513–621 (KIID…ARGM). Actin-binding regions lie at residues 118 to 373 (EEEK…NKYP) and 392 to 621 (TREE…ARGM).

In terms of assembly, monomer. In terms of tissue distribution, expressed by macrophages (at protein level).

It is found in the cytoplasm. It localises to the cytoskeleton. Its subcellular location is the cell junction. The protein resides in the cell projection. The protein localises to the ruffle membrane. Actin-binding protein. Plays a role in the activation of T-cells. The chain is Plastin-2 from Danio rerio (Zebrafish).